We begin with the raw amino-acid sequence, 105 residues long: Vacuolar ATPase assembly integral membrane protein VMA21 homolog (105 aa).

Residues 1–26 (MSTKNKKAAGGNGGAPKQTRQQSHDS) are disordered. The Cytoplasmic segment spans residues 1 to 36 (MSTKNKKAAGGNGGAPKQTRQQSHDSQDYSSFKTVL). A helical transmembrane segment spans residues 37–57 (FYCMLIVFLPVLTFFVLKGFV). Residues 58 to 68 (LDQFLDISEVK) are Lumenal-facing. The chain crosses the membrane as a helical span at residues 69–89 (VNIASAVGAVVALHIALGLYI). Residues 90 to 105 (YRAYFGAPGSKGSKTD) are Cytoplasmic-facing.

Belongs to the VMA21 family.

The protein resides in the endoplasmic reticulum membrane. The protein localises to the endoplasmic reticulum-Golgi intermediate compartment membrane. Its subcellular location is the cytoplasmic vesicle. It localises to the COPII-coated vesicle membrane. Functionally, required for the assembly of the V0 complex of the vacuolar ATPase (V-ATPase) in the endoplasmic reticulum. This Drosophila simulans (Fruit fly) protein is Vacuolar ATPase assembly integral membrane protein VMA21 homolog.